Here is a 307-residue protein sequence, read N- to C-terminus: Ribonuclease H2 subunit B (307 aa).

N-acetylalanine is present on Ala2. Lys291 is subject to N6-acetyllysine. A Phosphoserine modification is found at Ser292.

Belongs to the RNase H2 subunit B family. The RNase H2 complex is a heterotrimer composed of the catalytic subunit RNASEH2A and the non-catalytic subunits RNASEH2B and RNASEH2C.

The protein localises to the nucleus. Non catalytic subunit of RNase H2, an endonuclease that specifically degrades the RNA of RNA:DNA hybrids. Participates in DNA replication, possibly by mediating the removal of lagging-strand Okazaki fragment RNA primers during DNA replication. Mediates the excision of single ribonucleotides from DNA:RNA duplexes. This chain is Ribonuclease H2 subunit B (Rnaseh2b), found in Rattus norvegicus (Rat).